The following is a 155-amino-acid chain: Transcriptional repressor NrdR (155 aa).

A zinc finger spans residues 3 to 34 (CPNCHQNASRVIDSRPTDEGRTIRRRRECENC). The 91-residue stretch at 49–139 (LLVIKNDGTR…IYRQFTDMSS (91 aa)) folds into the ATP-cone domain.

The protein belongs to the NrdR family. Requires Zn(2+) as cofactor.

In terms of biological role, negatively regulates transcription of bacterial ribonucleotide reductase nrd genes and operons by binding to NrdR-boxes. The polypeptide is Transcriptional repressor NrdR (Lactobacillus delbrueckii subsp. bulgaricus (strain ATCC 11842 / DSM 20081 / BCRC 10696 / JCM 1002 / NBRC 13953 / NCIMB 11778 / NCTC 12712 / WDCM 00102 / Lb 14)).